The chain runs to 245 residues: MIIPALDLIDGKVVRLHQGDYNKQRDYDDDPIRRYQQYQQDGAKLLHLVDLTGAKDPLARQIPLLKQLVACVNVPVQVGGGIRSEEDVKSLLAAGASRVVIGSTAVSQPELVKTWFERYGADAIVLALDVRIDEQGKKWVAVSGWQENSPYTLEEIIALYQPVGLKHVLCTDISRDGTLAGSNVELYKEISQRFPDILFQASGGIGDLQDIAALPGSGVAGIIVGRALLEGKFTLQEAISCWQNA.

Aspartate 7 functions as the Proton acceptor in the catalytic mechanism. Residue aspartate 129 is the Proton donor of the active site.

The protein belongs to the HisA/HisF family.

It is found in the cytoplasm. The catalysed reaction is 1-(5-phospho-beta-D-ribosyl)-5-[(5-phospho-beta-D-ribosylamino)methylideneamino]imidazole-4-carboxamide = 5-[(5-phospho-1-deoxy-D-ribulos-1-ylimino)methylamino]-1-(5-phospho-beta-D-ribosyl)imidazole-4-carboxamide. The protein operates within amino-acid biosynthesis; L-histidine biosynthesis; L-histidine from 5-phospho-alpha-D-ribose 1-diphosphate: step 4/9. The sequence is that of 1-(5-phosphoribosyl)-5-[(5-phosphoribosylamino)methylideneamino] imidazole-4-carboxamide isomerase from Proteus mirabilis (strain HI4320).